The following is a 218-amino-acid chain: Adenylate kinase (218 aa).

Residue 12–17 participates in ATP binding; that stretch reads GAGKGT. Residues 32-61 form an NMP region; the sequence is STGDIFRKNISENTPLGIEAKSYMDNGQLV. Residues Thr33, Arg38, 59-61, 87-90, and Gln94 each bind AMP; these read QLV and GFPR. The LID stretch occupies residues 128–165; that stretch reads GRRVCPSCGASYHIKFNPPTNDGKCDLCGSDVIQRKDD. Arg129 is a binding site for ATP. Residues Cys132 and Cys135 each contribute to the Zn(2+) site. 138–139 contacts ATP; that stretch reads SY. Cys152 and Cys155 together coordinate Zn(2+). The AMP site is built by Arg162 and Arg173. ATP is bound at residue Gln201.

The protein belongs to the adenylate kinase family. Monomer.

It localises to the cytoplasm. The enzyme catalyses AMP + ATP = 2 ADP. It functions in the pathway purine metabolism; AMP biosynthesis via salvage pathway; AMP from ADP: step 1/1. Its function is as follows. Catalyzes the reversible transfer of the terminal phosphate group between ATP and AMP. Plays an important role in cellular energy homeostasis and in adenine nucleotide metabolism. The chain is Adenylate kinase from Clostridium perfringens (strain 13 / Type A).